A 286-amino-acid chain; its full sequence is D-tagatose-1,6-bisphosphate aldolase subunit KbaY (286 aa).

Catalysis depends on aspartate 82, which acts as the Proton donor. Zn(2+)-binding residues include histidine 83 and histidine 180. Glycine 181 lines the dihydroxyacetone phosphate pocket. Residue histidine 208 participates in Zn(2+) binding. Dihydroxyacetone phosphate-binding positions include glycine 209 to serine 211 and asparagine 230 to threonine 233.

Belongs to the class II fructose-bisphosphate aldolase family. TagBP aldolase KbaY subfamily. As to quaternary structure, homotetramer. Forms a complex with KbaZ. Zn(2+) is required as a cofactor.

The catalysed reaction is D-tagatofuranose 1,6-bisphosphate = D-glyceraldehyde 3-phosphate + dihydroxyacetone phosphate. It functions in the pathway carbohydrate metabolism; D-tagatose 6-phosphate degradation; D-glyceraldehyde 3-phosphate and glycerone phosphate from D-tagatose 6-phosphate: step 2/2. In terms of biological role, catalytic subunit of the tagatose-1,6-bisphosphate aldolase KbaYZ, which catalyzes the reversible aldol condensation of dihydroxyacetone phosphate (DHAP or glycerone-phosphate) with glyceraldehyde 3-phosphate (G3P) to produce tagatose 1,6-bisphosphate (TBP). Requires KbaZ subunit for full activity and stability. The polypeptide is D-tagatose-1,6-bisphosphate aldolase subunit KbaY (Escherichia coli O127:H6 (strain E2348/69 / EPEC)).